A 510-amino-acid chain; its full sequence is Probable sphingolipid transporter spinster homolog 3 (510 aa).

Residues 44-64 (SSLSPVWLLVIFCIINLLNYM) traverse the membrane as a helical segment. N-linked (GlcNAc...) asparagine glycosylation is found at Asn75 and Asn98. 11 consecutive transmembrane segments (helical) span residues 106 to 126 (VLSSSFMVGLLIASPIFASLA), 136 to 156 (VWTIAVLGCGSSFAFWFIVLC), 158 to 178 (MFVGVGEASFISLAAPFIDDN), 185 to 205 (AAWLGLFYMCIPSGVALGYVY), 219 to 239 (FWGEAVLMAPFAVLGFLMKPL), 298 to 318 (VFVVNVLGYVSYNFVIGAYSY), 336 to 356 (IFGAVTIICGIVGTLSGGFIL), 369 to 387 (LLSGATFLGAVFCFTAFTL), 392 to 414 (GFIALFALGELLVFATQAPVNYV), 430 to 450 (ISTVAIHIFGDVPSSPLVGIV), and 462 to 482 (LILTSILFLAAAIWFIGKINL).

The protein belongs to the major facilitator superfamily. Spinster (TC 2.A.1.49) family.

The protein localises to the mitochondrion inner membrane. Probable sphingolipid transporter. This is Probable sphingolipid transporter spinster homolog 3 from Arabidopsis thaliana (Mouse-ear cress).